Reading from the N-terminus, the 208-residue chain is MKPIQKLSLFRLLPLSCVLLLTACTLTQPGGTGSADSPQWRAHTQQLQQLNQYQTRGSFAYLSNEKKVYARFFWQQYHPERYRLLLTNPLGSTELELIVQPNMTQLTDSQGKKYFSDNPEEIIYQFTNMDIPLDNLRHWITGLPGDAKNFKLDANYLLKTVNYQQNGATWQVNYQSYDTSTTPALPNRLELIQGDRRIKLKMDNWTTK.

Residues 1–23 (MKPIQKLSLFRLLPLSCVLLLTA) form the signal peptide. Cys24 is lipidated: N-palmitoyl cysteine. A lipid anchor (S-diacylglycerol cysteine) is attached at Cys24.

This sequence belongs to the LolB family. In terms of assembly, monomer.

It is found in the cell outer membrane. Functionally, plays a critical role in the incorporation of lipoproteins in the outer membrane after they are released by the LolA protein. The polypeptide is Outer-membrane lipoprotein LolB (Photorhabdus laumondii subsp. laumondii (strain DSM 15139 / CIP 105565 / TT01) (Photorhabdus luminescens subsp. laumondii)).